We begin with the raw amino-acid sequence, 1578 residues long: MSVELAKVSILGKECVHVGYQIHEHIVKSTLEHCKSSTYVIINDTNVSKVPYYHDLVSLFEKSLPEGSRLLRYDVKPGEAHKSRETKADIEDYLLLEGCTRDTVIIAVGGGVIGDMIGFVASTFMRGVRVIQVPTSLLAMVDSSIGGKTAVDTPLGKNFVGAFWQPQFVFVDIKWLETLPQREFINGIAEVIKTACIWNGEEFARLEANAETFLSVVNNSQTVSVFSPHHNETVELTYTNIESMLEHTYKLVLESIKVKAHVVSSDERESGLRNLLNFGHTIGHAYEAILTPQALHGECVSIGMVKEAELSRYMNILSATQVARMVKILAAYGLPISVNEKWFKELTLNKKTPLDVLLKKMSIDKKNDGSKKKVVILEKIGKCYGTSAHVVSDEDLRFVLSDETLVHPFNNIPEGQNKVITPPGSKSISNRALILAALGKGTCKIKNLLHSDDTKHMLNAVQQLKGATISWEDDGETVVVHGQGGSTLTAPSEALYLGNAGTASRFLTTVAALAKKDGKNDHVILTGNARMQERPIGPLVDSLRSNGLKIDYLNRQGSLPLKINTETNFKGGKIELAATVSSQYVSSILMCAPYAEEPVTLSLIGGKPISQLYVDMTIKMMDAFGIKVTTSTTEPFTYHIPKGNYINPAEYTIESDASSATYPLSFAAITGTTVTVPNIGSASLQGDARFAVDVLRPMGCEVTQTATSTTVTGPPRGQLKPLKHVDMEPMTDAFLTASVVAAICNNGTTNTTTIEGIANQRVKECNRIEAMVTQLAKFGVRANELPDGIQIHGVNSISELRQPSDAGIETYDDHRVAMSFSLLAGMVNSDKKDDESSVRILERQCTGKTWPGWWDVLHSQLGARLDGAEPSTTKSSEVKKSVVIIGMRAAGKSTVSKWCAESLGYRLLDLDEEFERQYGKGTVKDFVAESGWDEFRKEETRIFQEAVDKYGDKGYVLSSGGGIVERSESRQALKRFAESGGIVLHLHRDIEETIVFLKSDPTRPAYIEEIRDVWERREKWYHECSNFTFFAAHCSNEIEFRNLRHVFSNFIRRVLGAEKIPVPSRRSAFVCLTFEDLSDHLSKLDEITYGCEAVELRVDHLSSFSSDFVTKQISLLRAATKSLPIVFTVRTVSQGGKFQDDDYDLLESLLKVALKNAVEYIDLELTLPNNILYNVLNKKSNTKIIGSHHDFAAKFPWDDAEWENRYNQALSLDVDIVKFVGTAVSFDDNLALEKFRSTHTLKPLIAINMTETGKLSRVLNNILTPVTSKLLPSAAAPGQLTLAEINQLYHQIGGLPAKKFFVIGSPIGHSRSPILHNTGYELLGLPHHFDKFETEDIEVVKKELLTREDLGGLAVTIPLKLDIIDSMFELSEAAKTIGAVNTVIPLGKNKFRGDNTDWLGIKNSLVSNGVPSSVSGSAGLIIGAGGTSRAAIYALKQIGCDTIYMLNRTTEKLQKLKSEFSEEYKIVVVESAEQTESIKEQVSVAVSCVPADKPLDPELLNKLERLLAKGTNSSFKPTLLDAAYKPSVTPIMKLARDKFNWNIVPGAEMLVHQGVEQFSKWTGAKPPFKAIFDAVTQE.

The segment at 1–393 (MSVELAKVSI…YGTSAHVVSD (393 aa)) is 3-dehydroquinate synthase. NAD(+) contacts are provided by residues 44–46 (DTN), 79–82 (EAHK), 110–112 (GGV), and Asp115. Arg126 lines the 7-phospho-2-dehydro-3-deoxy-D-arabino-heptonate pocket. Residue 135-136 (TS) coordinates NAD(+). 2 residues coordinate 7-phospho-2-dehydro-3-deoxy-D-arabino-heptonate: Asp142 and Lys148. Position 157 (Lys157) interacts with NAD(+). Asn158 serves as a coordination point for 7-phospho-2-dehydro-3-deoxy-D-arabino-heptonate. NAD(+)-binding positions include 175–178 (WLET) and Asn186. Residue Glu190 participates in Zn(2+) binding. Residues 190 to 193 (EVIK) and Lys259 contribute to the 7-phospho-2-dehydro-3-deoxy-D-arabino-heptonate site. Glu269 acts as the Proton acceptor; for 3-dehydroquinate synthase activity in catalysis. 7-phospho-2-dehydro-3-deoxy-D-arabino-heptonate-binding positions include 273–277 (RNLLN) and His280. Residue His280 participates in Zn(2+) binding. The Proton acceptor; for 3-dehydroquinate synthase activity role is filled by His284. 7-phospho-2-dehydro-3-deoxy-D-arabino-heptonate is bound by residues His296 and Lys365. Residue His296 participates in Zn(2+) binding. The tract at residues 406–863 (VHPFNNIPEG…WDVLHSQLGA (458 aa)) is EPSP synthase. Cys845 (for EPSP synthase activity) is an active-site residue. Residues 882–1071 (VVIIGMRAAG…VPSRRSAFVC (190 aa)) are shikimate kinase. 886 to 893 (GMRAAGKS) is an ATP binding site. Positions 1072–1284 (LTFEDLSDHL…AAPGQLTLAE (213 aa)) are 3-dehydroquinase. His1189 serves as the catalytic Proton acceptor; for 3-dehydroquinate dehydratase activity. Lys1218 serves as the catalytic Schiff-base intermediate with substrate; for 3-dehydroquinate dehydratase activity. Positions 1297–1578 (AKKFFVIGSP…KAIFDAVTQE (282 aa)) are shikimate dehydrogenase.

This sequence in the N-terminal section; belongs to the sugar phosphate cyclases superfamily. Dehydroquinate synthase family. In the 2nd section; belongs to the EPSP synthase family. It in the 3rd section; belongs to the shikimate kinase family. The protein in the 4th section; belongs to the type-I 3-dehydroquinase family. This sequence in the C-terminal section; belongs to the shikimate dehydrogenase family. In terms of assembly, homodimer. Zn(2+) serves as cofactor.

The protein localises to the cytoplasm. It catalyses the reaction 7-phospho-2-dehydro-3-deoxy-D-arabino-heptonate = 3-dehydroquinate + phosphate. The enzyme catalyses 3-dehydroquinate = 3-dehydroshikimate + H2O. It carries out the reaction shikimate + NADP(+) = 3-dehydroshikimate + NADPH + H(+). The catalysed reaction is shikimate + ATP = 3-phosphoshikimate + ADP + H(+). It catalyses the reaction 3-phosphoshikimate + phosphoenolpyruvate = 5-O-(1-carboxyvinyl)-3-phosphoshikimate + phosphate. It participates in metabolic intermediate biosynthesis; chorismate biosynthesis; chorismate from D-erythrose 4-phosphate and phosphoenolpyruvate: step 2/7. The protein operates within metabolic intermediate biosynthesis; chorismate biosynthesis; chorismate from D-erythrose 4-phosphate and phosphoenolpyruvate: step 3/7. Its pathway is metabolic intermediate biosynthesis; chorismate biosynthesis; chorismate from D-erythrose 4-phosphate and phosphoenolpyruvate: step 4/7. It functions in the pathway metabolic intermediate biosynthesis; chorismate biosynthesis; chorismate from D-erythrose 4-phosphate and phosphoenolpyruvate: step 5/7. It participates in metabolic intermediate biosynthesis; chorismate biosynthesis; chorismate from D-erythrose 4-phosphate and phosphoenolpyruvate: step 6/7. Its function is as follows. The AROM polypeptide catalyzes 5 consecutive enzymatic reactions in prechorismate polyaromatic amino acid biosynthesis. This is Pentafunctional AROM polypeptide from Kluyveromyces lactis (strain ATCC 8585 / CBS 2359 / DSM 70799 / NBRC 1267 / NRRL Y-1140 / WM37) (Yeast).